Here is a 249-residue protein sequence, read N- to C-terminus: tRNA (guanine-N(1)-)-methyltransferase (249 aa).

Residues Gly-113 and 133-138 (IGDFVL) each bind S-adenosyl-L-methionine.

The protein belongs to the RNA methyltransferase TrmD family. In terms of assembly, homodimer.

Its subcellular location is the cytoplasm. It catalyses the reaction guanosine(37) in tRNA + S-adenosyl-L-methionine = N(1)-methylguanosine(37) in tRNA + S-adenosyl-L-homocysteine + H(+). In terms of biological role, specifically methylates guanosine-37 in various tRNAs. This is tRNA (guanine-N(1)-)-methyltransferase from Aliivibrio salmonicida (strain LFI1238) (Vibrio salmonicida (strain LFI1238)).